Here is a 490-residue protein sequence, read N- to C-terminus: Zinc finger protein STP4 (490 aa).

Composition is skewed to low complexity over residues 1–16 (MLVS…SVMS) and 52–73 (PSLP…STLN). Positions 1–85 (MLVSSSFASS…PPPPLTTSYS (85 aa)) are disordered. Phosphoserine is present on residues Ser-153 and Ser-155. Over residues 231 to 247 (QQQQQLNSSSSASALPS) the composition is skewed to low complexity. The tract at residues 231 to 273 (QQQQQLNSSSSASALPSIHSPLTNEHTSRYSSSLKDSAKITKQ) is disordered. Residues 250–265 (SPLTNEHTSRYSSSLK) are compositionally biased toward polar residues. The C2H2-type zinc finger occupies 304–326 (HKCPICQRGFARNNDLIRHKKRH). Positions 338–375 (ESDNNSGADDQDDTARTSANNDSDDSNDKLAASSSSEE) are disordered.

The protein resides in the cytoplasm. It is found in the mitochondrion. It localises to the nucleus. The protein is Zinc finger protein STP4 (STP4) of Saccharomyces cerevisiae (strain ATCC 204508 / S288c) (Baker's yeast).